We begin with the raw amino-acid sequence, 266 residues long: Probable metal transport system membrane protein TP_0036 (266 aa).

The next 8 helical transmembrane spans lie at 10–30 (AFVA…HLVL), 34–54 (ALMG…AVSC), 56–76 (IHPG…IEFL), 88–108 (LSIV…SGLI), 120–140 (ILVV…FCVG), 172–192 (VASV…GILV), 211–231 (FLLT…LGLV), and 238–258 (VAPG…VIAL).

It belongs to the ABC-3 integral membrane protein family.

The protein resides in the cell inner membrane. Its function is as follows. Part of an ATP-driven transport system TP_0034/TP_0035/TP_0036 for a metal. In Treponema pallidum (strain Nichols), this protein is Probable metal transport system membrane protein TP_0036.